The chain runs to 617 residues: DNA-(apurinic or apyrimidinic site) endonuclease (617 aa).

The segment at 74 to 99 is disordered; sequence IKNSDEQNNSNNNNNNSSSSNFCSNN. Residues 81-99 are compositionally biased toward low complexity; it reads NNSNNNNNNSSSSNFCSNN. Mg(2+)-binding residues include N284 and E317. A disordered region spans residues 326 to 349; the sequence is SEPCDNKNKNKNKNDGIRDRGKIK. Over residues 329-349 the composition is skewed to basic and acidic residues; that stretch reads CDNKNKNKNKNDGIRDRGKIK. 4 residues coordinate Mg(2+): D474, N476, D606, and H607. The active-site Proton acceptor is H607.

It belongs to the DNA repair enzymes AP/ExoA family. It depends on Mg(2+) as a cofactor. Mn(2+) is required as a cofactor. May be proteolytically cleaved into a 64 kDa form.

The protein localises to the mitochondrion. It carries out the reaction Exonucleolytic cleavage in the 3'- to 5'-direction to yield nucleoside 5'-phosphates.. With respect to regulation, apurinic/apyrimidinic (AP) endonuclease activity is maximal at low Mg(2+) (0.5-2 mM) with no activity seen at high concentrations (more than 10 mM). 3'-5' exonuclease activity is maximal in the range of 0.5-2 mM Mg(2+) with activity seen up to 10 mM Mg(2+). Functionally, multifunctional protein that plays a central role in mitochondrial DNA base excision repair (BER) pathway induced by oxidative stress. Has apurinic/apyrimidinic (AP) endonuclease activity towards double-stranded DNA (dsDNA). Has nucleotide incision repair (NIR) activity; acts on dsDNA with oxidized bases thymine glycol and 5,6-dihydro-2'-deoxyuridine. Has 3'-5' exonuclease; can use dsDNA templates with 3'-OH termini including blunt-end, gapped and mismatched 3'-recessed. Has 3'-phosphatase activity; cleaves 3'-phosphate from blunt, recessed and gapped dsDNA templates, followed by 3'-5' exonuclease activity. Has RNase H-like activity; cleaves RNA on 3'-recessed RNA-DNA duplex. Plays a role in merosome infection of host erythrocytes. This Plasmodium falciparum (isolate 3D7) protein is DNA-(apurinic or apyrimidinic site) endonuclease.